The following is a 47-amino-acid chain: uncharacterized protein (47 aa).

Positions 24 to 47 are disordered; that stretch reads FGPNPIEPPTDIAPDPDSTKTWLI.

This is an uncharacterized protein from Mycobacterium tuberculosis (strain ATCC 25618 / H37Rv).